Consider the following 146-residue polypeptide: Ribosomal RNA large subunit methyltransferase H (146 aa).

Residues Leu-62, Gly-94, and 113-118 (LGELTL) contribute to the S-adenosyl-L-methionine site.

This sequence belongs to the RNA methyltransferase RlmH family. In terms of assembly, homodimer.

The protein resides in the cytoplasm. It catalyses the reaction pseudouridine(1915) in 23S rRNA + S-adenosyl-L-methionine = N(3)-methylpseudouridine(1915) in 23S rRNA + S-adenosyl-L-homocysteine + H(+). Functionally, specifically methylates the pseudouridine at position 1915 (m3Psi1915) in 23S rRNA. The polypeptide is Ribosomal RNA large subunit methyltransferase H (Deinococcus radiodurans (strain ATCC 13939 / DSM 20539 / JCM 16871 / CCUG 27074 / LMG 4051 / NBRC 15346 / NCIMB 9279 / VKM B-1422 / R1)).